We begin with the raw amino-acid sequence, 234 residues long: BTB/POZ domain-containing protein KCTD5 (234 aa).

The residue at position 2 (Ala2) is an N-acetylalanine. The region spanning 44–146 (KWVRLNVGGT…LVKDKIRERD (103 aa)) is the BTB domain. Residues 213–234 (PYGTTSEPSEKAKILQERGSRM) form a disordered region. The span at 220 to 234 (PSEKAKILQERGSRM) shows a compositional bias: basic and acidic residues.

Homopentamer. Interacts (via C-terminus) with GRASP55/GORASP2. Interacts with CUL3 and with ubiquitinated proteins. Interacts with CRY1.

The protein localises to the cytoplasm. It localises to the cytosol. Its subcellular location is the nucleus. Functionally, its interaction with CUL3 suggests that it may act as a substrate adapter in some E3 ligase complex. Does not affect the function of Kv channel Kv2.1/KCNB1, Kv1.2/KCNA2, Kv4.2/KCND2 and Kv3.4/KCNC4. In Rattus norvegicus (Rat), this protein is BTB/POZ domain-containing protein KCTD5 (Kctd5).